Consider the following 445-residue polypeptide: D-serine dehydratase (445 aa).

An N6-(pyridoxal phosphate)lysine modification is found at K118.

It belongs to the serine/threonine dehydratase family. DsdA subfamily. As to quaternary structure, monomer. Pyridoxal 5'-phosphate is required as a cofactor.

The catalysed reaction is D-serine = pyruvate + NH4(+). In Serratia proteamaculans (strain 568), this protein is D-serine dehydratase.